The sequence spans 408 residues: Photox toxin (408 aa).

Positions 168-196 are disordered; the sequence is NNQQHIKDSDGRKPVNNMPPPPPPPMADK. The span at 184–193 shows a compositional bias: pro residues; it reads NMPPPPPPPM. The region spanning 190-393 is the TR mART core domain; that stretch reads PPPMADKTQK…LRLTDDASAD (204 aa). Active-site residues include arginine 288, serine 318, and glutamate 355.

It in the C-terminal section; belongs to the SpvB family.

It carries out the reaction L-arginyl-[protein] + NAD(+) = N(omega)-(ADP-D-ribosyl)-L-arginyl-[protein] + nicotinamide + H(+). Mono-ADP-ribosylates chicken skeletal alpha-actin and human non-skeletal beta- and gamma-actin. Mono-ADP-ribosylates 'Arg-177' of yeast actin, blocking its ability to polymerize. Does not possess NAD(+)-glycohydrolase activity, unlike most mART enzymes. Upon expression in S.cerevisiae almost completely inhibits growth. The sequence is that of Photox toxin (phxA) from Photorhabdus laumondii subsp. laumondii (strain DSM 15139 / CIP 105565 / TT01) (Photorhabdus luminescens subsp. laumondii).